A 200-amino-acid chain; its full sequence is Ras-related protein RABF2a (200 aa).

17 to 25 (GDVGAGKSS) contributes to the GTP binding site. Positions 39-47 (QESTIGAAF) match the Effector region motif. Residues 65 to 69 (DTAGQ), 123 to 126 (NKAD), and 153 to 154 (SA) each bind GTP. Residues Cys-198 and Cys-199 are each lipidated (S-geranylgeranyl cysteine).

It belongs to the small GTPase superfamily. Rab family. In terms of assembly, interacts with VPS9A. Interacts with EREX (via PX domain). Binds to VPS3. As to expression, high in stem, root, and inflorescence.

The protein resides in the endosome membrane. It localises to the prevacuolar compartment membrane. Its function is as follows. Involved in the trafficking of soluble cargo proteins from the prevacuolar compartment to the central vacuole. Involved in vacuolar transport of storage proteins with EREX as effector. Regulates membrane trafficking to protein storage vacuoles (PSVs). This Arabidopsis thaliana (Mouse-ear cress) protein is Ras-related protein RABF2a (RABF2A).